The chain runs to 572 residues: Probable serine/threonine-protein kinase At1g54610 (572 aa).

The tract at residues 1-89 (MGCVFGREAA…SNPSKHWRGE (89 aa)) is disordered. A compositionally biased stretch (low complexity) spans 9 to 40 (AATTTTAEAKQAKSSKASSGVVVVGESSVTKS). A compositionally biased stretch (basic and acidic residues) spans 47-67 (DVEKKKNEEANGDKERKSSKG). A compositionally biased stretch (polar residues) spans 74-83 (KPNPRLSNPS). The Protein kinase domain maps to 118-402 (FEKIDKIGQG…ASAALKSEFF (285 aa)). Residues 124-132 (IGQGTYSNV) and Lys-147 contribute to the ATP site. Asp-242 functions as the Proton acceptor in the catalytic mechanism. Disordered regions lie at residues 409-474 (CEPA…NVDR) and 526-572 (SSFN…AVVA). Over residues 419 to 434 (PSKEIDAKRRDEETRR) the composition is skewed to basic and acidic residues. Residues 554–572 (SRKKKDNTKSSKGKRAVVA) are compositionally biased toward basic residues.

It belongs to the protein kinase superfamily. Ser/Thr protein kinase family.

The enzyme catalyses L-seryl-[protein] + ATP = O-phospho-L-seryl-[protein] + ADP + H(+). The catalysed reaction is L-threonyl-[protein] + ATP = O-phospho-L-threonyl-[protein] + ADP + H(+). In Arabidopsis thaliana (Mouse-ear cress), this protein is Probable serine/threonine-protein kinase At1g54610.